Here is a 377-residue protein sequence, read N- to C-terminus: Prostaglandin reductase-3 (377 aa).

K35 is subject to N6-acetyllysine. Positions 185, 205, 209, 224, 247, 269, and 275 each coordinate NADP(+). At S299 the chain carries Phosphoserine. NADP(+) contacts are provided by residues 303-305 (FFL) and N361.

Belongs to the zinc-containing alcohol dehydrogenase family. Quinone oxidoreductase subfamily.

The protein localises to the peroxisome. The enzyme catalyses 13,14-dihydro-15-oxo-prostaglandin E2 + NADP(+) = 15-oxoprostaglandin E2 + NADPH + H(+). It carries out the reaction 13,14-dihydro-15-oxo-prostaglandin E1 + NADP(+) = 15-oxoprostaglandin E1 + NADPH + H(+). The catalysed reaction is 13,14-dihydro-15-oxo-PGF2alpha + NADP(+) = 15-oxoprostaglandin F2alpha + NADPH + H(+). It catalyses the reaction 13,14-dihydro-15-oxo-prostaglandin F1alpha + NADP(+) = 15-oxoprostaglandin F1alpha + NADPH + H(+). Its function is as follows. Functions as 15-oxo-prostaglandin 13-reductase and acts on 15-keto-PGE1, 15-keto-PGE2, 15-keto-PGE1-alpha and 15-keto-PGE2-alpha with highest efficiency towards 15-keto-PGE2-alpha. Overexpression represses transcriptional activity of PPARG and inhibits adipocyte differentiation. In Bos taurus (Bovine), this protein is Prostaglandin reductase-3 (PTGR3).